Here is a 343-residue protein sequence, read N- to C-terminus: Holliday junction branch migration complex subunit RuvB (343 aa).

The disordered stretch occupies residues 1–26 (MKEKILTFSSDPSSPVTRHETEEDTG). Residues 3-193 (EKILTFSSDP…FGIFRKFDFY (191 aa)) form a large ATPase domain (RuvB-L) region. Polar residues predominate over residues 7 to 16 (TFSSDPSSPV). ATP contacts are provided by residues leucine 32, arginine 33, glycine 74, lysine 77, threonine 78, threonine 79, 140–142 (EDF), arginine 183, tyrosine 193, and arginine 230. Mg(2+) is bound at residue threonine 78. Positions 194–264 (SRQDLARIVS…AIDDALALEG (71 aa)) are small ATPAse domain (RuvB-S). A head domain (RuvB-H) region spans residues 267 to 343 (EKGLTGLDRS…YRHLGVQWRG (77 aa)). Positions 322 and 327 each coordinate DNA.

This sequence belongs to the RuvB family. Homohexamer. Forms an RuvA(8)-RuvB(12)-Holliday junction (HJ) complex. HJ DNA is sandwiched between 2 RuvA tetramers; dsDNA enters through RuvA and exits via RuvB. An RuvB hexamer assembles on each DNA strand where it exits the tetramer. Each RuvB hexamer is contacted by two RuvA subunits (via domain III) on 2 adjacent RuvB subunits; this complex drives branch migration. In the full resolvosome a probable DNA-RuvA(4)-RuvB(12)-RuvC(2) complex forms which resolves the HJ.

Its subcellular location is the cytoplasm. The catalysed reaction is ATP + H2O = ADP + phosphate + H(+). Functionally, the RuvA-RuvB-RuvC complex processes Holliday junction (HJ) DNA during genetic recombination and DNA repair, while the RuvA-RuvB complex plays an important role in the rescue of blocked DNA replication forks via replication fork reversal (RFR). RuvA specifically binds to HJ cruciform DNA, conferring on it an open structure. The RuvB hexamer acts as an ATP-dependent pump, pulling dsDNA into and through the RuvAB complex. RuvB forms 2 homohexamers on either side of HJ DNA bound by 1 or 2 RuvA tetramers; 4 subunits per hexamer contact DNA at a time. Coordinated motions by a converter formed by DNA-disengaged RuvB subunits stimulates ATP hydrolysis and nucleotide exchange. Immobilization of the converter enables RuvB to convert the ATP-contained energy into a lever motion, pulling 2 nucleotides of DNA out of the RuvA tetramer per ATP hydrolyzed, thus driving DNA branch migration. The RuvB motors rotate together with the DNA substrate, which together with the progressing nucleotide cycle form the mechanistic basis for DNA recombination by continuous HJ branch migration. Branch migration allows RuvC to scan DNA until it finds its consensus sequence, where it cleaves and resolves cruciform DNA. The sequence is that of Holliday junction branch migration complex subunit RuvB from Desulfosudis oleivorans (strain DSM 6200 / JCM 39069 / Hxd3) (Desulfococcus oleovorans).